Reading from the N-terminus, the 356-residue chain is Tyrosine recombinase XerS (356 aa).

Positions 16 to 121 constitute a Core-binding (CB) domain; it reads LMPWYVLEYY…ALSSLYKYLT (106 aa). The region spanning 169-354 is the Tyr recombinase domain; sequence GFLTYIDQEH…VSDEQKNALD (186 aa). Residues Arg210, Lys234, His306, Arg309, and His332 contribute to the active site. The active-site O-(3'-phospho-DNA)-tyrosine intermediate is Tyr341.

Belongs to the 'phage' integrase family. XerS subfamily.

It is found in the cytoplasm. Its activity is regulated as follows. FtsK is required for recombination. In terms of biological role, site-specific tyrosine recombinase, which acts by catalyzing the cutting and rejoining of the recombining DNA molecules. Essential to convert dimers of the bacterial chromosome into monomers to permit their segregation at cell division. This is Tyrosine recombinase XerS from Streptococcus pneumoniae (strain 70585).